The primary structure comprises 439 residues: 23S rRNA (uracil(1939)-C(5))-methyltransferase RlmD (439 aa).

A TRAM domain is found at 1 to 54 (MTAPVLIESLDQEGRGVAHAEGKVIFIEGALPGEVVTYNAYRRKPSFELAQVGQ). Residues Cys67, Cys73, Cys76, and Cys155 each contribute to the [4Fe-4S] cluster site. S-adenosyl-L-methionine is bound by residues Gln264, Phe293, Asn298, Glu314, Asn342, and Asp363. Catalysis depends on Cys391, which acts as the Nucleophile.

This sequence belongs to the class I-like SAM-binding methyltransferase superfamily. RNA M5U methyltransferase family. RlmD subfamily.

The enzyme catalyses uridine(1939) in 23S rRNA + S-adenosyl-L-methionine = 5-methyluridine(1939) in 23S rRNA + S-adenosyl-L-homocysteine + H(+). Catalyzes the formation of 5-methyl-uridine at position 1939 (m5U1939) in 23S rRNA. This is 23S rRNA (uracil(1939)-C(5))-methyltransferase RlmD from Nitrosospira multiformis (strain ATCC 25196 / NCIMB 11849 / C 71).